Reading from the N-terminus, the 361-residue chain is MLVSDFHFDLPDELIARYPTEERTASRLLHLNGETGHFEDKQFFDLLDQINEGDLLIFNNTRVIPARLYGRKASGGKLEVLVERVLDEHRCLAHVRASKAPKEGAELVLGEDKLGEGNGFKAIMTARHDALFELHFNEEQPVFDLLQQAGHMPLPPYIDRPDEDADQERYQTVYSKVLGAVAAPTAGLHFDNPTLEKLKAKGVNIAFVTLHVGAGTFQPVRVDNILDHKMHAEYAEVSQAVVDQILATKATGKRVIAVGTTSVRSIESAAQAAEKEGKLIAPFFSDTSIFLYPGKTFRVVDALVTNFHLPESTLIMLVSAFAGYRNTMKAYQHAVEAKYRFFSYGDAMFINKNPNALNDLP.

Belongs to the QueA family. As to quaternary structure, monomer.

Its subcellular location is the cytoplasm. It catalyses the reaction 7-aminomethyl-7-carbaguanosine(34) in tRNA + S-adenosyl-L-methionine = epoxyqueuosine(34) in tRNA + adenine + L-methionine + 2 H(+). The protein operates within tRNA modification; tRNA-queuosine biosynthesis. In terms of biological role, transfers and isomerizes the ribose moiety from AdoMet to the 7-aminomethyl group of 7-deazaguanine (preQ1-tRNA) to give epoxyqueuosine (oQ-tRNA). The protein is S-adenosylmethionine:tRNA ribosyltransferase-isomerase of Actinobacillus pleuropneumoniae serotype 3 (strain JL03).